We begin with the raw amino-acid sequence, 101 residues long: Small ribosomal subunit protein uS14 (101 aa).

It belongs to the universal ribosomal protein uS14 family. Part of the 30S ribosomal subunit. Contacts proteins S3 and S10.

In terms of biological role, binds 16S rRNA, required for the assembly of 30S particles and may also be responsible for determining the conformation of the 16S rRNA at the A site. This is Small ribosomal subunit protein uS14 from Psychromonas ingrahamii (strain DSM 17664 / CCUG 51855 / 37).